The following is a 508-amino-acid chain: Glycerol kinase (508 aa).

T14 serves as a coordination point for ADP. ATP is bound by residues T14, T15, and S16. T14 contributes to the sn-glycerol 3-phosphate binding site. R18 contributes to the ADP binding site. Positions 84, 85, and 136 each coordinate sn-glycerol 3-phosphate. Glycerol contacts are provided by R84, E85, and Y136. H232 carries the post-translational modification Phosphohistidine; by HPr. D246 contributes to the sn-glycerol 3-phosphate binding site. 2 residues coordinate glycerol: D246 and Q247. Positions 268 and 311 each coordinate ADP. Residues T268, G311, Q315, and G412 each coordinate ATP. ADP-binding residues include G412 and N416.

It belongs to the FGGY kinase family. In terms of assembly, homotetramer and homodimer (in equilibrium). Post-translationally, the phosphoenolpyruvate-dependent sugar phosphotransferase system (PTS), including enzyme I, and histidine-containing protein (HPr) are required for the phosphorylation, which leads to the activation of the enzyme.

It catalyses the reaction glycerol + ATP = sn-glycerol 3-phosphate + ADP + H(+). The protein operates within polyol metabolism; glycerol degradation via glycerol kinase pathway; sn-glycerol 3-phosphate from glycerol: step 1/1. Activated by phosphorylation and inhibited by fructose 1,6-bisphosphate (FBP). Key enzyme in the regulation of glycerol uptake and metabolism. Catalyzes the phosphorylation of glycerol to yield sn-glycerol 3-phosphate. This chain is Glycerol kinase, found in Streptococcus pyogenes serotype M28 (strain MGAS6180).